Consider the following 249-residue polypeptide: Coproheme decarboxylase (249 aa).

Residues Arg-131, 145–149 (YPMDK), His-172, Gln-185, and Ser-223 contribute to the Fe-coproporphyrin III site. Tyr-145 is a catalytic residue.

It belongs to the ChdC family. Type 1 subfamily. The cofactor is Fe-coproporphyrin III.

It carries out the reaction Fe-coproporphyrin III + 2 H2O2 + 2 H(+) = heme b + 2 CO2 + 4 H2O. The enzyme catalyses Fe-coproporphyrin III + H2O2 + H(+) = harderoheme III + CO2 + 2 H2O. The catalysed reaction is harderoheme III + H2O2 + H(+) = heme b + CO2 + 2 H2O. It functions in the pathway porphyrin-containing compound metabolism; protoheme biosynthesis. Involved in coproporphyrin-dependent heme b biosynthesis. Catalyzes the decarboxylation of Fe-coproporphyrin III (coproheme) to heme b (protoheme IX), the last step of the pathway. The reaction occurs in a stepwise manner with a three-propionate intermediate. The sequence is that of Coproheme decarboxylase from Shouchella clausii (strain KSM-K16) (Alkalihalobacillus clausii).